A 714-amino-acid chain; its full sequence is Phosphate acetyltransferase (714 aa).

Residues 390 to 714 form a phosphate acetyltransferase region; it reads AFRYQLTELA…TAIQASQQQQ (325 aa).

It in the N-terminal section; belongs to the CobB/CobQ family. This sequence in the C-terminal section; belongs to the phosphate acetyltransferase and butyryltransferase family. In terms of assembly, homohexamer.

Its subcellular location is the cytoplasm. The enzyme catalyses acetyl-CoA + phosphate = acetyl phosphate + CoA. The catalysed reaction is propanoyl-CoA + phosphate = propanoyl phosphate + CoA. It participates in metabolic intermediate biosynthesis; acetyl-CoA biosynthesis; acetyl-CoA from acetate: step 2/2. Allosterically inhibited by NADH. Involved in acetate metabolism. Catalyzes the reversible interconversion of acetyl-CoA and acetyl phosphate. The direction of the overall reaction changes depending on growth conditions. Required for acetate recapture but not for acetate excretion when this organism is grown on ethanolamine (EA); is unable to complement an eutD deletion during growth on EA. Works with proprionate kinase PduW to capture exogenous propionate and regenerate propionyl-CoA during degradation of propionate and 1,2-propanediol (1,2-PD). The chain is Phosphate acetyltransferase (pta) from Salmonella typhimurium (strain LT2 / SGSC1412 / ATCC 700720).